The primary structure comprises 312 residues: Aspartate carbamoyltransferase catalytic subunit (312 aa).

Residues arginine 62 and threonine 63 each coordinate carbamoyl phosphate. Lysine 90 is a binding site for L-aspartate. Carbamoyl phosphate contacts are provided by arginine 112, histidine 140, and glutamine 143. Residues arginine 173 and arginine 228 each coordinate L-aspartate. Residues glycine 269 and proline 270 each coordinate carbamoyl phosphate.

This sequence belongs to the aspartate/ornithine carbamoyltransferase superfamily. ATCase family. As to quaternary structure, heterododecamer (2C3:3R2) of six catalytic PyrB chains organized as two trimers (C3), and six regulatory PyrI chains organized as three dimers (R2).

The catalysed reaction is carbamoyl phosphate + L-aspartate = N-carbamoyl-L-aspartate + phosphate + H(+). It participates in pyrimidine metabolism; UMP biosynthesis via de novo pathway; (S)-dihydroorotate from bicarbonate: step 2/3. Its function is as follows. Catalyzes the condensation of carbamoyl phosphate and aspartate to form carbamoyl aspartate and inorganic phosphate, the committed step in the de novo pyrimidine nucleotide biosynthesis pathway. The protein is Aspartate carbamoyltransferase catalytic subunit of Deinococcus geothermalis (strain DSM 11300 / CIP 105573 / AG-3a).